The sequence spans 547 residues: DNA ligase (547 aa).

Glu-244 is a binding site for ATP. The active-site N6-AMP-lysine intermediate is Lys-246. 6 residues coordinate ATP: Arg-251, Arg-266, Glu-295, Phe-334, Arg-405, and Lys-411.

Belongs to the ATP-dependent DNA ligase family. It depends on Mg(2+) as a cofactor.

The enzyme catalyses ATP + (deoxyribonucleotide)n-3'-hydroxyl + 5'-phospho-(deoxyribonucleotide)m = (deoxyribonucleotide)n+m + AMP + diphosphate.. Its function is as follows. DNA ligase that seals nicks in double-stranded DNA during DNA replication, DNA recombination and DNA repair. In Methanospirillum hungatei JF-1 (strain ATCC 27890 / DSM 864 / NBRC 100397 / JF-1), this protein is DNA ligase.